Reading from the N-terminus, the 382-residue chain is Galactokinase (382 aa).

34–37 (EHTD) serves as a coordination point for substrate. 124–130 (GAGLSSS) is a binding site for ATP. Mg(2+)-binding residues include serine 130 and glutamate 162. Aspartate 174 serves as the catalytic Proton acceptor. Substrate is bound at residue tyrosine 223.

Belongs to the GHMP kinase family. GalK subfamily.

The protein resides in the cytoplasm. It catalyses the reaction alpha-D-galactose + ATP = alpha-D-galactose 1-phosphate + ADP + H(+). Its pathway is carbohydrate metabolism; galactose metabolism. In terms of biological role, catalyzes the transfer of the gamma-phosphate of ATP to D-galactose to form alpha-D-galactose-1-phosphate (Gal-1-P). This Escherichia coli O127:H6 (strain E2348/69 / EPEC) protein is Galactokinase.